The primary structure comprises 467 residues: tRNA-2-methylthio-N(6)-dimethylallyladenosine synthase (467 aa).

The 121-residue stretch at 5–125 folds into the MTTase N-terminal domain; it reads RKLHIKSYGC…LPQLLAQASR (121 aa). Residues cysteine 14, cysteine 50, cysteine 88, cysteine 166, cysteine 170, and cysteine 173 each coordinate [4Fe-4S] cluster. In terms of domain architecture, Radical SAM core spans 152-384; the sequence is RARGVSAFVT…QSLIDSQQAA (233 aa). The TRAM domain maps to 387 to 449; sequence KAAIGSVVDV…RYSLLGELVA (63 aa).

It belongs to the methylthiotransferase family. MiaB subfamily. Monomer. [4Fe-4S] cluster is required as a cofactor.

The protein localises to the cytoplasm. It carries out the reaction N(6)-dimethylallyladenosine(37) in tRNA + (sulfur carrier)-SH + AH2 + 2 S-adenosyl-L-methionine = 2-methylsulfanyl-N(6)-dimethylallyladenosine(37) in tRNA + (sulfur carrier)-H + 5'-deoxyadenosine + L-methionine + A + S-adenosyl-L-homocysteine + 2 H(+). Functionally, catalyzes the methylthiolation of N6-(dimethylallyl)adenosine (i(6)A), leading to the formation of 2-methylthio-N6-(dimethylallyl)adenosine (ms(2)i(6)A) at position 37 in tRNAs that read codons beginning with uridine. This chain is tRNA-2-methylthio-N(6)-dimethylallyladenosine synthase, found in Bradyrhizobium sp. (strain ORS 278).